The following is a 269-amino-acid chain: Eukaryotic translation initiation factor 3 subunit G-1 (269 aa).

Residues 188–266 enclose the RRM domain; the sequence is AAIRISNLSE…LILSVEWSKP (79 aa).

It belongs to the eIF-3 subunit G family. In terms of assembly, component of the eukaryotic translation initiation factor 3 (eIF-3) complex. The eIF-3 complex interacts with pix.

It localises to the cytoplasm. Functionally, RNA-binding component of the eukaryotic translation initiation factor 3 (eIF-3) complex, which is involved in protein synthesis of a specialized repertoire of mRNAs and, together with other initiation factors, stimulates binding of mRNA and methionyl-tRNAi to the 40S ribosome. The eIF-3 complex specifically targets and initiates translation of a subset of mRNAs involved in cell proliferation. This subunit can bind 18S rRNA. This Drosophila erecta (Fruit fly) protein is Eukaryotic translation initiation factor 3 subunit G-1.